We begin with the raw amino-acid sequence, 143 residues long: Small ribosomal subunit protein uS9 (143 aa).

Residues 123–143 form a disordered region; the sequence is RPEPKKFGGRGARSRFQKSYR. Basic residues predominate over residues 134–143; it reads ARSRFQKSYR.

This sequence belongs to the universal ribosomal protein uS9 family.

The chain is Small ribosomal subunit protein uS9 (RPS16) from Kluyveromyces lactis (strain ATCC 8585 / CBS 2359 / DSM 70799 / NBRC 1267 / NRRL Y-1140 / WM37) (Yeast).